The sequence spans 124 residues: Small ribosomal subunit protein uS12 (124 aa).

Position 89 is a 3-methylthioaspartic acid (D89).

It belongs to the universal ribosomal protein uS12 family. As to quaternary structure, part of the 30S ribosomal subunit. Contacts proteins S8 and S17. May interact with IF1 in the 30S initiation complex.

With S4 and S5 plays an important role in translational accuracy. Its function is as follows. Interacts with and stabilizes bases of the 16S rRNA that are involved in tRNA selection in the A site and with the mRNA backbone. Located at the interface of the 30S and 50S subunits, it traverses the body of the 30S subunit contacting proteins on the other side and probably holding the rRNA structure together. The combined cluster of proteins S8, S12 and S17 appears to hold together the shoulder and platform of the 30S subunit. This chain is Small ribosomal subunit protein uS12, found in Arthrobacter sp. (strain FB24).